A 457-amino-acid chain; its full sequence is Reticulon-like protein B18 (457 aa).

The interval 94 to 183 (AAVTARRSKT…SPSSDQPQDV (90 aa)) is disordered. Positions 124-136 (LRSEAMVDTKENT) are enriched in basic and acidic residues. The segment covering 149–163 (NQRKQKKLGRSKKEK) has biased composition (basic residues). A compositionally biased stretch (low complexity) spans 166-183 (SVPLLASPSPSSDQPQDV). The 191-residue stretch at 195–385 (ISDLIMWRDV…AFWNLTSLKT (191 aa)) folds into the Reticulon domain. Transmembrane regions (helical) follow at residues 208-228 (TLWF…AKGF), 230-250 (FSVF…SFLS), 314-334 (YGYL…SFTI), and 377-397 (FWNL…VVVI). The segment at 407–457 (DSEDEEEKKQQEKTHPEQQKSPEDKSTSPRSAEEEQALVLVAETKAPKKLY) is disordered. Residues 413 to 439 (EKKQQEKTHPEQQKSPEDKSTSPRSAE) are compositionally biased toward basic and acidic residues.

Its subcellular location is the endoplasmic reticulum membrane. This is Reticulon-like protein B18 (RTNLB18) from Arabidopsis thaliana (Mouse-ear cress).